The following is a 113-amino-acid chain: Ig kappa chain V-II region MOPC 511 (113 aa).

The segment at 1–23 (DIVITQDELSKPVTSGESVSISC) is framework-1. Cys23 and Cys93 are joined by a disulfide. The complementarity-determining-1 stretch occupies residues 24 to 39 (RSSKSLLYKDGKTYLN). A framework-2 region spans residues 40–54 (WFLQGPQQSPRLLIY). The interval 55–61 (LMSTRAS) is complementarity-determining-2. Residues 62-93 (GVSDRFSGSGSGTDFTLEISRVKAEDVGVYYC) form a framework-3 region. The complementarity-determining-3 stretch occupies residues 94 to 102 (QQLVEYPLT). Residues 103 to 112 (FGAGTKLELK) form a framework-4 region.

The polypeptide is Ig kappa chain V-II region MOPC 511 (Mus musculus (Mouse)).